The chain runs to 436 residues: Cold sensitive U2 snRNA suppressor 1 (436 aa).

The segment covering 1–10 (MARTKSRKRS) has biased composition (basic residues). Residues 1–22 (MARTKSRKRSGNNQNKNASVVN) are disordered. Low complexity predominate over residues 12–22 (NNQNKNASVVN). Phosphothreonine occurs at positions 104 and 112. Ser114 carries the post-translational modification Phosphoserine. The disordered stretch occupies residues 374–436 (EFENSKEDTQ…SEKQLYTVLK (63 aa)). Residues 389-408 (GRQDDKIDDEVEHKLDHFQE) show a composition bias toward basic and acidic residues.

The protein to mammalian SAP 145. Some, to C.elegans ZK632.11. In terms of assembly, belongs to the CWC complex (or CEF1-associated complex), a spliceosome sub-complex reminiscent of a late-stage spliceosome composed of the U2, U5 and U6 snRNAs and at least BUD13, BUD31, BRR2, CDC40, CEF1, CLF1, CUS1, CWC2, CWC15, CWC21, CWC22, CWC23, CWC24, CWC25, CWC27, ECM2, HSH155, IST3, ISY1, LEA1, MSL1, NTC20, PRP8, PRP9, PRP11, PRP19, PRP21, PRP22, PRP45, PRP46, SLU7, SMB1, SMD1, SMD2, SMD3, SMX2, SMX3, SNT309, SNU114, SPP2, SYF1, SYF2, RSE1 and YJU2. Interacts with RDS3.

It localises to the nucleus. Functionally, essential splicing protein required for U2 snRNP binding to pre-mRNA during spliceosome assembly. The chain is Cold sensitive U2 snRNA suppressor 1 (CUS1) from Saccharomyces cerevisiae (strain ATCC 204508 / S288c) (Baker's yeast).